Here is a 256-residue protein sequence, read N- to C-terminus: UPF0246 protein Maqu_2499 (256 aa).

The protein belongs to the UPF0246 family.

The protein is UPF0246 protein Maqu_2499 of Marinobacter nauticus (strain ATCC 700491 / DSM 11845 / VT8) (Marinobacter aquaeolei).